We begin with the raw amino-acid sequence, 458 residues long: tRNA-2-methylthio-N(6)-dimethylallyladenosine synthase (458 aa).

The MTTase N-terminal domain occupies 2-118 (PKLYIKTYGC…VFEHVDGILR (117 aa)). [4Fe-4S] cluster is bound by residues Cys11, Cys47, Cys81, Cys170, Cys174, and Cys177. Positions 156 to 389 (PGVRSTAYVS…LAVVNEIAIR (234 aa)) constitute a Radical SAM core domain. One can recognise a TRAM domain in the interval 392–455 (RDLVGTVQEV…GFTLYGVPCP (64 aa)).

This sequence belongs to the methylthiotransferase family. MiaB subfamily. As to quaternary structure, monomer. [4Fe-4S] cluster serves as cofactor.

It localises to the cytoplasm. It catalyses the reaction N(6)-dimethylallyladenosine(37) in tRNA + (sulfur carrier)-SH + AH2 + 2 S-adenosyl-L-methionine = 2-methylsulfanyl-N(6)-dimethylallyladenosine(37) in tRNA + (sulfur carrier)-H + 5'-deoxyadenosine + L-methionine + A + S-adenosyl-L-homocysteine + 2 H(+). Catalyzes the methylthiolation of N6-(dimethylallyl)adenosine (i(6)A), leading to the formation of 2-methylthio-N6-(dimethylallyl)adenosine (ms(2)i(6)A) at position 37 in tRNAs that read codons beginning with uridine. In Akkermansia muciniphila (strain ATCC BAA-835 / DSM 22959 / JCM 33894 / BCRC 81048 / CCUG 64013 / CIP 107961 / Muc), this protein is tRNA-2-methylthio-N(6)-dimethylallyladenosine synthase.